Here is a 117-residue protein sequence, read N- to C-terminus: Large ribosomal subunit protein eL30B (117 aa).

A compositionally biased stretch (low complexity) spans methionine 1 to serine 14. The interval methionine 1–aspartate 22 is disordered.

It belongs to the eukaryotic ribosomal protein eL30 family. As to quaternary structure, component of the large ribosomal subunit (LSU). Mature yeast ribosomes consist of a small (40S) and a large (60S) subunit. The 40S small subunit contains 1 molecule of ribosomal RNA (18S rRNA) and at least 33 different proteins. The large 60S subunit contains 3 rRNA molecules (25S, 5.8S and 5S rRNA) and at least 46 different proteins.

Its subcellular location is the cytoplasm. In terms of biological role, component of the ribosome, a large ribonucleoprotein complex responsible for the synthesis of proteins in the cell. The small ribosomal subunit (SSU) binds messenger RNAs (mRNAs) and translates the encoded message by selecting cognate aminoacyl-transfer RNA (tRNA) molecules. The large subunit (LSU) contains the ribosomal catalytic site termed the peptidyl transferase center (PTC), which catalyzes the formation of peptide bonds, thereby polymerizing the amino acids delivered by tRNAs into a polypeptide chain. The nascent polypeptides leave the ribosome through a tunnel in the LSU and interact with protein factors that function in enzymatic processing, targeting, and the membrane insertion of nascent chains at the exit of the ribosomal tunnel. The sequence is that of Large ribosomal subunit protein eL30B (rpl3002) from Schizosaccharomyces pombe (strain 972 / ATCC 24843) (Fission yeast).